The primary structure comprises 227 residues: Deoxyribose-phosphate aldolase (227 aa).

Residue Asp96 is the Proton donor/acceptor of the active site. Residue Lys158 is the Schiff-base intermediate with acetaldehyde of the active site. Lys187 acts as the Proton donor/acceptor in catalysis.

Belongs to the DeoC/FbaB aldolase family. DeoC type 1 subfamily.

Its subcellular location is the cytoplasm. It carries out the reaction 2-deoxy-D-ribose 5-phosphate = D-glyceraldehyde 3-phosphate + acetaldehyde. The protein operates within carbohydrate degradation; 2-deoxy-D-ribose 1-phosphate degradation; D-glyceraldehyde 3-phosphate and acetaldehyde from 2-deoxy-alpha-D-ribose 1-phosphate: step 2/2. In terms of biological role, catalyzes a reversible aldol reaction between acetaldehyde and D-glyceraldehyde 3-phosphate to generate 2-deoxy-D-ribose 5-phosphate. The protein is Deoxyribose-phosphate aldolase of Desulfotalea psychrophila (strain LSv54 / DSM 12343).